We begin with the raw amino-acid sequence, 608 residues long: Glutamine--fructose-6-phosphate aminotransferase [isomerizing] (608 aa).

The active-site Nucleophile; for GATase activity is C2. A Glutamine amidotransferase type-2 domain is found at 2–217 (CGIVGIVGTQ…DGDCAIVTRD (216 aa)). 2 consecutive SIS domains span residues 281 to 422 (ADKA…ARGT) and 456 to 598 (LSRD…VDQP). The For Fru-6P isomerization activity role is filled by K603.

In terms of assembly, homodimer.

It is found in the cytoplasm. The enzyme catalyses D-fructose 6-phosphate + L-glutamine = D-glucosamine 6-phosphate + L-glutamate. Functionally, catalyzes the first step in hexosamine metabolism, converting fructose-6P into glucosamine-6P using glutamine as a nitrogen source. The sequence is that of Glutamine--fructose-6-phosphate aminotransferase [isomerizing] from Agrobacterium fabrum (strain C58 / ATCC 33970) (Agrobacterium tumefaciens (strain C58)).